The sequence spans 503 residues: Beta-mannosyltransferase 4 (503 aa).

Over 1-24 (MKLDTQQISHLLSRQMYHLAPRKK) the chain is Cytoplasmic. The chain crosses the membrane as a helical span at residues 25–45 (LLIWGGSLGFVLLLLIVASSH). Residues 46–503 (QRIRSTILHR…QYCQRYGELH (458 aa)) lie on the Extracellular side of the membrane. The N-linked (GlcNAc...) asparagine glycan is linked to asparagine 468.

This sequence belongs to the BMT family.

It localises to the membrane. Functionally, beta-mannosyltransferase involved in cell wall biosynthesis. Responsible for addition of a hexose to the beta-mannose chain. This is Beta-mannosyltransferase 4 (BMT4) from Komagataella phaffii (strain ATCC 76273 / CBS 7435 / CECT 11047 / NRRL Y-11430 / Wegner 21-1) (Yeast).